The primary structure comprises 268 residues: Phosphatidylglycerol--prolipoprotein diacylglyceryl transferase (268 aa).

7 helical membrane passes run 21-41 (WYGI…GRFA), 54-74 (FAII…VFVL), 93-113 (GLAI…YLPM), 122-142 (ADVV…GNFF), 173-193 (VMHP…GILL), 203-223 (GVVF…IESI), and 236-256 (VAQL…AWFL). Arg137 provides a ligand contact to a 1,2-diacyl-sn-glycero-3-phospho-(1'-sn-glycerol).

The protein belongs to the Lgt family.

The protein resides in the cell membrane. The enzyme catalyses L-cysteinyl-[prolipoprotein] + a 1,2-diacyl-sn-glycero-3-phospho-(1'-sn-glycerol) = an S-1,2-diacyl-sn-glyceryl-L-cysteinyl-[prolipoprotein] + sn-glycerol 1-phosphate + H(+). The protein operates within protein modification; lipoprotein biosynthesis (diacylglyceryl transfer). Its function is as follows. Catalyzes the transfer of the diacylglyceryl group from phosphatidylglycerol to the sulfhydryl group of the N-terminal cysteine of a prolipoprotein, the first step in the formation of mature lipoproteins. This is Phosphatidylglycerol--prolipoprotein diacylglyceryl transferase from Symbiobacterium thermophilum (strain DSM 24528 / JCM 14929 / IAM 14863 / T).